The chain runs to 358 residues: Tripartite motif-containing protein 54 (358 aa).

The RING-type zinc finger occupies 26-82 (CPICLEMFSKPVVILPCQHNLCRKCANDVFQASNPLWQSRGSTTVSSGGRFRCPSCR). The B box-type zinc-finger motif lies at 121-163 (EQHLMCEEHEEEKINIYCLSCEVPTCSLCKVFGAHKDCEVAPL). 4 residues coordinate Zn(2+): Cys-126, His-129, Cys-149, and His-155. The interval 168–211 (KRQKSELSDGIAMLVAGNDRVQAVITQMEEVCQTIEDNSRRQKQ) is mediates microtubule-binding and homooligomerization. The stretch at 220-258 (LCAVLEERKGELLQALAREQEEKLQRVRGLIRQYGDHLE) forms a coiled coil. Residues 271–329 (MEEPQMALYLQQAKELINKVGAMSKVELAGRPEPGYESMEQFTVRVEHVAEMLRTIDFQ) enclose the COS domain. The tract at residues 326–358 (IDFQPGASGEEEEVAPDGEEGSAGPEEERPDGP) is disordered. Residues 334–345 (GEEEEVAPDGEE) are compositionally biased toward acidic residues.

In terms of assembly, homooligomer and heterooligomer. Interacts with tubulin. Interacts with TRIM63 and probably with TRIM55. In terms of tissue distribution, specifically expressed in heart and skeletal muscle.

It localises to the cytoplasm. The protein resides in the cytoskeleton. Its subcellular location is the myofibril. The protein localises to the sarcomere. It is found in the z line. Functionally, may bind and stabilize microtubules during myotubes formation. The chain is Tripartite motif-containing protein 54 (TRIM54) from Homo sapiens (Human).